Reading from the N-terminus, the 201-residue chain is 3-isopropylmalate dehydratase small subunit (201 aa).

This sequence belongs to the LeuD family. LeuD type 1 subfamily. As to quaternary structure, heterodimer of LeuC and LeuD.

It catalyses the reaction (2R,3S)-3-isopropylmalate = (2S)-2-isopropylmalate. The protein operates within amino-acid biosynthesis; L-leucine biosynthesis; L-leucine from 3-methyl-2-oxobutanoate: step 2/4. In terms of biological role, catalyzes the isomerization between 2-isopropylmalate and 3-isopropylmalate, via the formation of 2-isopropylmaleate. This Glaesserella parasuis serovar 5 (strain SH0165) (Haemophilus parasuis) protein is 3-isopropylmalate dehydratase small subunit.